Consider the following 313-residue polypeptide: Ribonuclease Z (313 aa).

Zn(2+) contacts are provided by His62, His64, Asp66, His67, His142, Asp212, and His270. Residue Asp66 is the Proton acceptor of the active site.

Belongs to the RNase Z family. Homodimer. Zn(2+) is required as a cofactor.

The catalysed reaction is Endonucleolytic cleavage of RNA, removing extra 3' nucleotides from tRNA precursor, generating 3' termini of tRNAs. A 3'-hydroxy group is left at the tRNA terminus and a 5'-phosphoryl group is left at the trailer molecule.. Functionally, zinc phosphodiesterase, which displays some tRNA 3'-processing endonuclease activity. Probably involved in tRNA maturation, by removing a 3'-trailer from precursor tRNA. This is Ribonuclease Z from Cytophaga hutchinsonii (strain ATCC 33406 / DSM 1761 / CIP 103989 / NBRC 15051 / NCIMB 9469 / D465).